We begin with the raw amino-acid sequence, 457 residues long: tRNA modification GTPase MnmE (457 aa).

Residues R25, E87, and R126 each coordinate (6S)-5-formyl-5,6,7,8-tetrahydrofolate. In terms of domain architecture, TrmE-type G spans 223 to 377; sequence GISTAIIGRP…IEERINQLFF (155 aa). N233 provides a ligand contact to K(+). GTP contacts are provided by residues 233 to 238, 252 to 258, and 277 to 280; these read NVGKSS, TDIEGTT, and DTAG. S237 is a Mg(2+) binding site. The K(+) site is built by T252, I254, and T257. T258 serves as a coordination point for Mg(2+). (6S)-5-formyl-5,6,7,8-tetrahydrofolate is bound at residue K457.

The protein belongs to the TRAFAC class TrmE-Era-EngA-EngB-Septin-like GTPase superfamily. TrmE GTPase family. In terms of assembly, homodimer. Heterotetramer of two MnmE and two MnmG subunits. The cofactor is K(+).

The protein localises to the cytoplasm. Functionally, exhibits a very high intrinsic GTPase hydrolysis rate. Involved in the addition of a carboxymethylaminomethyl (cmnm) group at the wobble position (U34) of certain tRNAs, forming tRNA-cmnm(5)s(2)U34. This chain is tRNA modification GTPase MnmE, found in Streptococcus sanguinis (strain SK36).